The primary structure comprises 380 residues: Type 4 apparatus protein DotM (380 aa).

Transmembrane regions (helical) follow at residues 18-38 (MAPVWIVILLFITAYFVWALA) and 99-119 (YPVICILVVLAFVLYNSNVTL).

In terms of assembly, the T4BSS is a complex nanomachine composed of several subcomplexes. This subunit is part of the Type IV Coupling Complex (T4CC), a subcomplex composed of the DotLMNYZ core and the IcmSW-LvgA adapter subunits, linked by the C-terminal tail of DotL. Six DotLMNYZ hetero-pentameric units may assemble into a hexameric nanomachine, forming an inner membrane channel for effectors to pass through. Interacts directly with DotL.

The protein localises to the cell inner membrane. Functionally, component of the Dot/Icm type IVB secretion system (T4BSS), which is used to inject bacterial effector proteins into eukaryotic host cells. Part of a subcomplex which recruits effector proteins and delivers them to the core transmembrane subcomplex. Forms the interacting surface for recruitment of acidic Glu-rich motif-containing effectors. In Legionella pneumophila subsp. pneumophila (strain Philadelphia 1 / ATCC 33152 / DSM 7513), this protein is Type 4 apparatus protein DotM.